Reading from the N-terminus, the 203-residue chain is Glycerol-3-phosphate acyltransferase (203 aa).

The next 4 helical transmembrane spans lie at 1 to 21 (MIQT…LGAI), 84 to 104 (WLQV…VWLG), 117 to 137 (IFLG…MAVI), and 157 to 179 (LMLL…LMVL).

Belongs to the PlsY family. In terms of assembly, probably interacts with PlsX.

The protein resides in the cell inner membrane. The enzyme catalyses an acyl phosphate + sn-glycerol 3-phosphate = a 1-acyl-sn-glycero-3-phosphate + phosphate. The protein operates within lipid metabolism; phospholipid metabolism. In terms of biological role, catalyzes the transfer of an acyl group from acyl-phosphate (acyl-PO(4)) to glycerol-3-phosphate (G3P) to form lysophosphatidic acid (LPA). This enzyme utilizes acyl-phosphate as fatty acyl donor, but not acyl-CoA or acyl-ACP. The chain is Glycerol-3-phosphate acyltransferase from Synechococcus sp. (strain CC9605).